We begin with the raw amino-acid sequence, 621 residues long: Chaperone protein HscA homolog (621 aa).

The protein belongs to the heat shock protein 70 family.

Its function is as follows. Chaperone involved in the maturation of iron-sulfur cluster-containing proteins. Has a low intrinsic ATPase activity which is markedly stimulated by HscB. The chain is Chaperone protein HscA homolog from Azotobacter vinelandii (strain DJ / ATCC BAA-1303).